We begin with the raw amino-acid sequence, 833 residues long: Multiple RNA-binding domain-containing protein 1 (833 aa).

The RRM 1 domain maps to 2 to 83; it reads SRIIIKNIPR…SRIEVHRALD (82 aa). A disordered region spans residues 160-251; the sequence is ENEEVFDTEI…DAQAPLSDDE (92 aa). Basic and acidic residues-rich tracts occupy residues 188 to 205 and 213 to 222; these read AAKRHEGDSIKSTEHDST and DGREKSSSEL. 4 RRM domains span residues 323–401, 506–578, 619–702, and 721–798; these read KRLF…PAKA, NVLL…KAPR, ATIY…LSHQ, and TKIL…YASN.

Belongs to the RRM MRD1 family.

The protein resides in the nucleus. Involved in pre-rRNA processing. In Schizosaccharomyces pombe (strain 972 / ATCC 24843) (Fission yeast), this protein is Multiple RNA-binding domain-containing protein 1 (mrd1).